A 296-amino-acid chain; its full sequence is tRNA dimethylallyltransferase (296 aa).

11–18 (GPTAVGKT) contributes to the ATP binding site. A substrate-binding site is contributed by 13 to 18 (TAVGKT). The interaction with substrate tRNA stretch occupies residues 36–39 (DSQQ).

Belongs to the IPP transferase family. As to quaternary structure, monomer. Requires Mg(2+) as cofactor.

It carries out the reaction adenosine(37) in tRNA + dimethylallyl diphosphate = N(6)-dimethylallyladenosine(37) in tRNA + diphosphate. In terms of biological role, catalyzes the transfer of a dimethylallyl group onto the adenine at position 37 in tRNAs that read codons beginning with uridine, leading to the formation of N6-(dimethylallyl)adenosine (i(6)A). This chain is tRNA dimethylallyltransferase, found in Streptococcus equi subsp. zooepidemicus (strain H70).